We begin with the raw amino-acid sequence, 493 residues long: Glutamyl-tRNA(Gln) amidotransferase subunit A (493 aa).

Residues K78 and S158 each act as charge relay system in the active site. The active-site Acyl-ester intermediate is S182.

This sequence belongs to the amidase family. GatA subfamily. As to quaternary structure, heterotrimer of A, B and C subunits.

It carries out the reaction L-glutamyl-tRNA(Gln) + L-glutamine + ATP + H2O = L-glutaminyl-tRNA(Gln) + L-glutamate + ADP + phosphate + H(+). In terms of biological role, allows the formation of correctly charged Gln-tRNA(Gln) through the transamidation of misacylated Glu-tRNA(Gln) in organisms which lack glutaminyl-tRNA synthetase. The reaction takes place in the presence of glutamine and ATP through an activated gamma-phospho-Glu-tRNA(Gln). The chain is Glutamyl-tRNA(Gln) amidotransferase subunit A from Rickettsia typhi (strain ATCC VR-144 / Wilmington).